We begin with the raw amino-acid sequence, 305 residues long: Glycine--tRNA ligase alpha subunit (305 aa).

The protein belongs to the class-II aminoacyl-tRNA synthetase family. Tetramer of two alpha and two beta subunits.

The protein resides in the cytoplasm. It catalyses the reaction tRNA(Gly) + glycine + ATP = glycyl-tRNA(Gly) + AMP + diphosphate. The sequence is that of Glycine--tRNA ligase alpha subunit from Streptococcus mutans serotype c (strain ATCC 700610 / UA159).